A 528-amino-acid polypeptide reads, in one-letter code: Oxamate amidohydrolase proenzyme (528 aa).

The active-site Nucleophile is Thr-342. 424–425 (GG) is a binding site for substrate.

The protein belongs to the gamma-glutamyltransferase family. In terms of assembly, heterodimer that consists of a 35.5 kDa large (alpha) subunit and a 20 kDa small (beta) subunit, which are synthesized from a single polypeptide. In terms of processing, cleaved by autocatalysis into a large (alpha) and a small (beta) subunit.

The catalysed reaction is oxamate + H2O = oxalate + NH4(+). Functionally, involved in the uric acid degradation pathway. Catalyzes the conversion of oxamate to oxalate. The chain is Oxamate amidohydrolase proenzyme from Klebsiella pneumoniae subsp. pneumoniae (strain ATCC 700721 / MGH 78578).